We begin with the raw amino-acid sequence, 210 residues long: UPF0301 protein Mnod_6933 (210 aa).

This sequence belongs to the UPF0301 (AlgH) family.

The polypeptide is UPF0301 protein Mnod_6933 (Methylobacterium nodulans (strain LMG 21967 / CNCM I-2342 / ORS 2060)).